The following is a 121-amino-acid chain: NAD(P)H-quinone oxidoreductase subunit M (121 aa).

It belongs to the complex I NdhM subunit family. In terms of assembly, NDH-1 can be composed of about 15 different subunits; different subcomplexes with different compositions have been identified which probably have different functions.

It localises to the cellular thylakoid membrane. The enzyme catalyses a plastoquinone + NADH + (n+1) H(+)(in) = a plastoquinol + NAD(+) + n H(+)(out). It carries out the reaction a plastoquinone + NADPH + (n+1) H(+)(in) = a plastoquinol + NADP(+) + n H(+)(out). Functionally, NDH-1 shuttles electrons from an unknown electron donor, via FMN and iron-sulfur (Fe-S) centers, to quinones in the respiratory and/or the photosynthetic chain. The immediate electron acceptor for the enzyme in this species is believed to be plastoquinone. Couples the redox reaction to proton translocation, and thus conserves the redox energy in a proton gradient. Cyanobacterial NDH-1 also plays a role in inorganic carbon-concentration. The polypeptide is NAD(P)H-quinone oxidoreductase subunit M (Nostoc punctiforme (strain ATCC 29133 / PCC 73102)).